Consider the following 363-residue polypeptide: Phosphoribosylformylglycinamidine cyclo-ligase (363 aa).

It belongs to the AIR synthase family.

The protein localises to the cytoplasm. The catalysed reaction is 2-formamido-N(1)-(5-O-phospho-beta-D-ribosyl)acetamidine + ATP = 5-amino-1-(5-phospho-beta-D-ribosyl)imidazole + ADP + phosphate + H(+). Its pathway is purine metabolism; IMP biosynthesis via de novo pathway; 5-amino-1-(5-phospho-D-ribosyl)imidazole from N(2)-formyl-N(1)-(5-phospho-D-ribosyl)glycinamide: step 2/2. This chain is Phosphoribosylformylglycinamidine cyclo-ligase, found in Brucella anthropi (strain ATCC 49188 / DSM 6882 / CCUG 24695 / JCM 21032 / LMG 3331 / NBRC 15819 / NCTC 12168 / Alc 37) (Ochrobactrum anthropi).